The primary structure comprises 370 residues: Queuine tRNA-ribosyltransferase (370 aa).

The active-site Proton acceptor is the aspartate 92. Substrate-binding positions include 92–96 (DSGGF), aspartate 146, glutamine 190, and glycine 217. The tract at residues 248 to 254 (GVGTPEN) is RNA binding. The Nucleophile role is filled by aspartate 267. Zn(2+) is bound by residues cysteine 305, cysteine 307, cysteine 310, and histidine 336.

It belongs to the queuine tRNA-ribosyltransferase family. As to quaternary structure, homodimer. Within each dimer, one monomer is responsible for RNA recognition and catalysis, while the other monomer binds to the replacement base PreQ1. Requires Zn(2+) as cofactor.

The catalysed reaction is 7-aminomethyl-7-carbaguanine + guanosine(34) in tRNA = 7-aminomethyl-7-carbaguanosine(34) in tRNA + guanine. The protein operates within tRNA modification; tRNA-queuosine biosynthesis. In terms of biological role, catalyzes the base-exchange of a guanine (G) residue with the queuine precursor 7-aminomethyl-7-deazaguanine (PreQ1) at position 34 (anticodon wobble position) in tRNAs with GU(N) anticodons (tRNA-Asp, -Asn, -His and -Tyr). Catalysis occurs through a double-displacement mechanism. The nucleophile active site attacks the C1' of nucleotide 34 to detach the guanine base from the RNA, forming a covalent enzyme-RNA intermediate. The proton acceptor active site deprotonates the incoming PreQ1, allowing a nucleophilic attack on the C1' of the ribose to form the product. After dissociation, two additional enzymatic reactions on the tRNA convert PreQ1 to queuine (Q), resulting in the hypermodified nucleoside queuosine (7-(((4,5-cis-dihydroxy-2-cyclopenten-1-yl)amino)methyl)-7-deazaguanosine). In Desulforapulum autotrophicum (strain ATCC 43914 / DSM 3382 / VKM B-1955 / HRM2) (Desulfobacterium autotrophicum), this protein is Queuine tRNA-ribosyltransferase.